A 382-amino-acid polypeptide reads, in one-letter code: UDP-N-acetylenolpyruvoylglucosamine reductase (382 aa).

An FAD-binding PCMH-type domain is found at 50 to 253 (RVGGPAVLAE…REAVLRLRAS (204 aa)). The active site involves arginine 193. The Proton donor role is filled by serine 270. Residue glutamate 374 is part of the active site.

The protein belongs to the MurB family. FAD serves as cofactor.

It is found in the cytoplasm. The catalysed reaction is UDP-N-acetyl-alpha-D-muramate + NADP(+) = UDP-N-acetyl-3-O-(1-carboxyvinyl)-alpha-D-glucosamine + NADPH + H(+). Its pathway is cell wall biogenesis; peptidoglycan biosynthesis. Its function is as follows. Cell wall formation. This chain is UDP-N-acetylenolpyruvoylglucosamine reductase, found in Nocardia farcinica (strain IFM 10152).